We begin with the raw amino-acid sequence, 162 residues long: B-box zinc finger protein 23 (162 aa).

Zn(2+)-binding residues include Cys5, Cys8, Cys28, His33, Cys63, Cys66, Cys86, and His91. A B box-type 1; atypical zinc finger spans residues 5-47; that stretch reads CEVCEKAEAEVLCCSDEAVLCKPCDIKVHEANKLFQRHHRVAL. The segment at 63–101 adopts a B box-type 2; atypical zinc-finger fold; that stretch reads CDICQERKGYFFCLEDRAMLCNDCDEAIHTCNSHQRFLL. The interval 137–162 is disordered; it reads QYSSEETEAGNSGEIVHKNPSVILSP.

It is found in the nucleus. Functionally, probable transcription factor that may be involved in seedling photomorphogenesis. This is B-box zinc finger protein 23 from Arabidopsis thaliana (Mouse-ear cress).